The chain runs to 98 residues: NADH-ubiquinone oxidoreductase chain 4L (98 aa).

3 consecutive transmembrane segments (helical) span residues 2–22 (TQAS…TLIF), 29–49 (TLLC…MTAL), and 61–81 (IVML…LAMI).

It belongs to the complex I subunit 4L family. Core subunit of respiratory chain NADH dehydrogenase (Complex I) which is composed of 45 different subunits.

The protein resides in the mitochondrion inner membrane. It catalyses the reaction a ubiquinone + NADH + 5 H(+)(in) = a ubiquinol + NAD(+) + 4 H(+)(out). In terms of biological role, core subunit of the mitochondrial membrane respiratory chain NADH dehydrogenase (Complex I) which catalyzes electron transfer from NADH through the respiratory chain, using ubiquinone as an electron acceptor. Part of the enzyme membrane arm which is embedded in the lipid bilayer and involved in proton translocation. This Calomys musculinus (Drylands vesper mouse) protein is NADH-ubiquinone oxidoreductase chain 4L (MT-ND4L).